An 84-amino-acid polypeptide reads, in one-letter code: Small ribosomal subunit protein uS17 (84 aa).

Belongs to the universal ribosomal protein uS17 family. In terms of assembly, part of the 30S ribosomal subunit.

Functionally, one of the primary rRNA binding proteins, it binds specifically to the 5'-end of 16S ribosomal RNA. The chain is Small ribosomal subunit protein uS17 from Clostridium botulinum (strain Eklund 17B / Type B).